The chain runs to 99 residues: DNA-binding protein Fis (99 aa).

Positions 1–25 (MFEQKISSEALTTTTSIPATGQITQ) are disordered. The segment at residues 75 to 94 (QTRAATMLGINRGTLRKKLK) is a DNA-binding region (H-T-H motif).

It belongs to the transcriptional regulatory Fis family. Homodimer.

Activates ribosomal RNA transcription. Plays a direct role in upstream activation of rRNA promoters. The sequence is that of DNA-binding protein Fis from Psychromonas ingrahamii (strain DSM 17664 / CCUG 51855 / 37).